The primary structure comprises 325 residues: Tetraacyldisaccharide 4'-kinase (325 aa).

An ATP-binding site is contributed by 55–62; that stretch reads TAGGNGKT.

This sequence belongs to the LpxK family.

The enzyme catalyses a lipid A disaccharide + ATP = a lipid IVA + ADP + H(+). It participates in glycolipid biosynthesis; lipid IV(A) biosynthesis; lipid IV(A) from (3R)-3-hydroxytetradecanoyl-[acyl-carrier-protein] and UDP-N-acetyl-alpha-D-glucosamine: step 6/6. Functionally, transfers the gamma-phosphate of ATP to the 4'-position of a tetraacyldisaccharide 1-phosphate intermediate (termed DS-1-P) to form tetraacyldisaccharide 1,4'-bis-phosphate (lipid IVA). This chain is Tetraacyldisaccharide 4'-kinase, found in Salmonella heidelberg (strain SL476).